Here is a 236-residue protein sequence, read N- to C-terminus: MQSELQRGFVLHRRPYSETSLLVDLFTEESGRLTVIAKGARAKRSSWKSVLQPFTPLLLRWTGKSTLKTLAKAEPAAITLPLQQIALYSGFYVNELLTRVIESETPNPALFQHYLKCLTGLATETNIEPTLRLFEFQLLQILGYGVDFLHCAGSGEPVDFSMTYRYREEKGFIASLVKDNLTFYGRDLLAFEALDFSDDAVRQAAKRFTRIALKPYLGDKPLKSRELFTQNILLLK.

The protein belongs to the RecO family.

Involved in DNA repair and RecF pathway recombination. This Haemophilus influenzae (strain PittGG) protein is DNA repair protein RecO.